The primary structure comprises 76 residues: Cytochrome c oxidase subunit 6C-1 (76 aa).

At 4–14 (GALLPKPQMHD) the chain is on the mitochondrial matrix side. The helical transmembrane segment at 15 to 55 (PLSKRLWVHIVGAFIVDLGVAAAHKFGAAKPRKKAYADFYR) threads the bilayer. Residues 56-76 (NHDPMKDFDEMRKAGVFRSVK) are Mitochondrial intermembrane-facing.

It belongs to the cytochrome c oxidase subunit 6c family. Component of the cytochrome c oxidase (complex IV, CIV), a multisubunit enzyme composed of 14 subunits. The complex is composed of a catalytic core of 3 subunits MT-CO1, MT-CO2 and MT-CO3, encoded in the mitochondrial DNA, and 11 supernumerary subunits COX4I, COX5A, COX5B, COX6A, COX6B, COX6C, COX7A, COX7B, COX7C, COX8 and NDUFA4, which are encoded in the nuclear genome. The complex exists as a monomer or a dimer and forms supercomplexes (SCs) in the inner mitochondrial membrane with NADH-ubiquinone oxidoreductase (complex I, CI) and ubiquinol-cytochrome c oxidoreductase (cytochrome b-c1 complex, complex III, CIII), resulting in different assemblies (supercomplex SCI(1)III(2)IV(1) and megacomplex MCI(2)III(2)IV(2)).

The protein localises to the mitochondrion inner membrane. It functions in the pathway energy metabolism; oxidative phosphorylation. Functionally, component of the cytochrome c oxidase, the last enzyme in the mitochondrial electron transport chain which drives oxidative phosphorylation. The respiratory chain contains 3 multisubunit complexes succinate dehydrogenase (complex II, CII), ubiquinol-cytochrome c oxidoreductase (cytochrome b-c1 complex, complex III, CIII) and cytochrome c oxidase (complex IV, CIV), that cooperate to transfer electrons derived from NADH and succinate to molecular oxygen, creating an electrochemical gradient over the inner membrane that drives transmembrane transport and the ATP synthase. Cytochrome c oxidase is the component of the respiratory chain that catalyzes the reduction of oxygen to water. Electrons originating from reduced cytochrome c in the intermembrane space (IMS) are transferred via the dinuclear copper A center (CU(A)) of subunit 2 and heme A of subunit 1 to the active site in subunit 1, a binuclear center (BNC) formed by heme A3 and copper B (CU(B)). The BNC reduces molecular oxygen to 2 water molecules using 4 electrons from cytochrome c in the IMS and 4 protons from the mitochondrial matrix. The protein is Cytochrome c oxidase subunit 6C-1 (Cox6c1) of Rattus norvegicus (Rat).